The sequence spans 505 residues: OVARIAN TUMOR DOMAIN-containing deubiquitinating enzyme 6 (505 aa).

Positions 1–191 (MTRILVQRGS…NSSDEHMPCY (191 aa)) are disordered. Positions 9–30 (GSSGSSSNSSRPSSSSSSSSGS) are enriched in low complexity. The segment covering 51–72 (DEKQEEVTVVEKAECSDAKDVA) has biased composition (basic and acidic residues). The segment covering 73-86 (VDSDEPADREDDEG) has biased composition (acidic residues). The span at 115-124 (PPVPAPPPKP) shows a compositional bias: pro residues. Positions 159 to 173 (SSRSSPTGSHPSSPR) are enriched in low complexity. The segment covering 174 to 188 (SHSENEGYNSSDEHM) has biased composition (basic and acidic residues). Positions 216–339 (FEIRRMLEDG…GNHYNSLVDP (124 aa)) constitute an OTU domain. The active site involves D224. The active-site Nucleophile is the C227. H332 is a catalytic residue. Positions 416-447 (RIGPKESSTSNAETSSSGARPSGSDSKPAEAV) are disordered. The span at 421–441 (ESSTSNAETSSSGARPSGSDS) shows a compositional bias: low complexity. A UBA domain is found at 446–491 (AVKEKTVLSSSIEMVLSMGFSYAQAMEAYSIFGDDVDSMVCYVLET).

This sequence belongs to the peptidase C85 family. Interacts with KDM1C. In terms of tissue distribution, mostly expressed in stems flowers and siliques, and, to a lower extent, in leaves, roots and seedlings.

The protein resides in the nucleus. It is found in the cytoplasm. It carries out the reaction Thiol-dependent hydrolysis of ester, thioester, amide, peptide and isopeptide bonds formed by the C-terminal Gly of ubiquitin (a 76-residue protein attached to proteins as an intracellular targeting signal).. In terms of biological role, hydrolase that can remove conjugated ubiquitin from proteins in vitro and may therefore play an important regulatory role at the level of protein turnover by preventing degradation. Binds chromatin (e.g. nucleosomes and histones) and has enzymatic histone deubiquitinase activity, specific for the H2B histone. Can both repress (e.g. OSR2) and promote (e.g. AN3) the expression of target genes by associating with chromatin, deubiquitinating H2B and regulating its euchromatic histone marks (e.g. H3ac and H3K4me). In association with LDL1/KDM1C, involved in transcriptional gene repression via histone deubiquitination and demethylation. Promotes the concerted epigenetic regulation and repression (e.g. the removal of euchromatic histone acetylation, ubiquitination, and methylation marks) of a set of genes (e.g. GA20OX, WUS, OSR2, ARL and ABI5) that collectively limit plant growth thus stimulating plant growth and increasing cell size. This Arabidopsis thaliana (Mouse-ear cress) protein is OVARIAN TUMOR DOMAIN-containing deubiquitinating enzyme 6.